The following is a 1696-amino-acid chain: uncharacterized protein (1696 aa).

Disordered stretches follow at residues 1-113, 151-194, 258-284, and 299-376; these read MDSS…HPQY, DSWT…SRSR, DVTR…PEKK, and GRRE…KQRG. A compositionally biased stretch (pro residues) spans 21-42; it reads LHPPSAPLPPPPPLPPPPPPRQ. Over residues 52 to 61 the composition is skewed to polar residues; that stretch reads GRSTQSNGQR. Residues 96–113 show a composition bias toward low complexity; the sequence is QQQHQPLSLQQQQQHPQY. Residues 170-183 are compositionally biased toward polar residues; sequence RNYQYDYSRNSSGV. 3 stretches are compositionally biased toward basic and acidic residues: residues 267 to 284, 325 to 340, and 358 to 376; these read EGAR…PEKK, ETPR…EWSR, and RGKE…KQRG. A Phosphoserine modification is found at S378. Disordered regions lie at residues 419–483, 688–724, 1063–1090, 1184–1211, 1319–1340, 1361–1429, and 1658–1696; these read RALL…GGKL, SDIG…LDSP, IKHK…GGTS, TSKS…VAGS, GEAV…SGVR, VVSV…SDAS, and SESR…DSGM. Basic and acidic residues-rich tracts occupy residues 421–436 and 695–704; these read LLSD…ERNG and DDNKRIDKNV. A Phosphoserine modification is found at S708. Residues 1184–1204 are compositionally biased toward basic and acidic residues; it reads TSKSIEKIESSGGTSEHRTPE. Residues 1361 to 1370 show a composition bias toward basic and acidic residues; sequence VVSVPHRDPQ. Composition is skewed to polar residues over residues 1389–1398, 1658–1667, and 1677–1696; these read NYSTQKSYPS, SESRCNQSIS, and SAAN…DSGM.

This is an uncharacterized protein from Arabidopsis thaliana (Mouse-ear cress).